The primary structure comprises 346 residues: Holliday junction branch migration complex subunit RuvB (346 aa).

The interval 1 to 182 (MSEAARLIAP…FGIPVRLNFY (182 aa)) is large ATPase domain (RuvB-L). ATP contacts are provided by residues R22, G63, K66, T67, T68, 129 to 131 (EDF), R172, Y182, and R219. Residue T67 participates in Mg(2+) binding. The interval 183-253 (TVEELELIVR…IADEALTRLL (71 aa)) is small ATPAse domain (RuvB-S). Residues 256–346 (SMGLDQLDRR…SQFRLTLEDD (91 aa)) form a head domain (RuvB-H) region. Residues R292, R311, and R316 each coordinate DNA.

Belongs to the RuvB family. In terms of assembly, homohexamer. Forms an RuvA(8)-RuvB(12)-Holliday junction (HJ) complex. HJ DNA is sandwiched between 2 RuvA tetramers; dsDNA enters through RuvA and exits via RuvB. An RuvB hexamer assembles on each DNA strand where it exits the tetramer. Each RuvB hexamer is contacted by two RuvA subunits (via domain III) on 2 adjacent RuvB subunits; this complex drives branch migration. In the full resolvosome a probable DNA-RuvA(4)-RuvB(12)-RuvC(2) complex forms which resolves the HJ.

The protein localises to the cytoplasm. It catalyses the reaction ATP + H2O = ADP + phosphate + H(+). The RuvA-RuvB-RuvC complex processes Holliday junction (HJ) DNA during genetic recombination and DNA repair, while the RuvA-RuvB complex plays an important role in the rescue of blocked DNA replication forks via replication fork reversal (RFR). RuvA specifically binds to HJ cruciform DNA, conferring on it an open structure. The RuvB hexamer acts as an ATP-dependent pump, pulling dsDNA into and through the RuvAB complex. RuvB forms 2 homohexamers on either side of HJ DNA bound by 1 or 2 RuvA tetramers; 4 subunits per hexamer contact DNA at a time. Coordinated motions by a converter formed by DNA-disengaged RuvB subunits stimulates ATP hydrolysis and nucleotide exchange. Immobilization of the converter enables RuvB to convert the ATP-contained energy into a lever motion, pulling 2 nucleotides of DNA out of the RuvA tetramer per ATP hydrolyzed, thus driving DNA branch migration. The RuvB motors rotate together with the DNA substrate, which together with the progressing nucleotide cycle form the mechanistic basis for DNA recombination by continuous HJ branch migration. Branch migration allows RuvC to scan DNA until it finds its consensus sequence, where it cleaves and resolves cruciform DNA. The polypeptide is Holliday junction branch migration complex subunit RuvB (Rhizobium meliloti (strain 1021) (Ensifer meliloti)).